Consider the following 248-residue polypeptide: 2,3-bisphosphoglycerate-dependent phosphoglycerate mutase (248 aa).

Substrate contacts are provided by residues 8–15 (RHGESVWN), 21–22 (TG), Arg60, 87–90 (ERHY), Lys98, and 114–115 (RR). The active-site Tele-phosphohistidine intermediate is His9. Glu87 functions as the Proton donor/acceptor in the catalytic mechanism. Positions 116–135 (SYDTPPPPMEVSDPRHPSHD) are disordered. Residue 183 to 184 (GN) participates in substrate binding.

The protein belongs to the phosphoglycerate mutase family. BPG-dependent PGAM subfamily. In terms of assembly, homodimer.

It carries out the reaction (2R)-2-phosphoglycerate = (2R)-3-phosphoglycerate. The protein operates within carbohydrate degradation; glycolysis; pyruvate from D-glyceraldehyde 3-phosphate: step 3/5. In terms of biological role, catalyzes the interconversion of 2-phosphoglycerate and 3-phosphoglycerate. This Bdellovibrio bacteriovorus (strain ATCC 15356 / DSM 50701 / NCIMB 9529 / HD100) protein is 2,3-bisphosphoglycerate-dependent phosphoglycerate mutase.